Consider the following 95-residue polypeptide: Large ribosomal subunit protein bL25 (95 aa).

Belongs to the bacterial ribosomal protein bL25 family. As to quaternary structure, part of the 50S ribosomal subunit; part of the 5S rRNA/L5/L18/L25 subcomplex. Contacts the 5S rRNA. Binds to the 5S rRNA independently of L5 and L18.

Its function is as follows. This is one of the proteins that binds to the 5S RNA in the ribosome where it forms part of the central protuberance. This chain is Large ribosomal subunit protein bL25, found in Shewanella amazonensis (strain ATCC BAA-1098 / SB2B).